The sequence spans 480 residues: Cytochrome c oxidase subunit 1 (480 aa).

A helical transmembrane segment spans residues 22–42 (ISYLWLAYWFGMIGFYMSVLI). Positions 45 and 50 each coordinate Ca(2+). 8 helical membrane passes run 64-84 (LLFT…GLFG), 109-129 (SLLL…LEIG), 151-171 (LIIF…INFI), 194-214 (IVLT…VFLM), 240-260 (LFWF…FGII), 278-298 (MILA…HHMY), 309-329 (YFTT…FNWV), and 343-363 (LILF…TGVV). H69 is a binding site for Fe(II)-heme a. Residue H246 coordinates Cu cation. A cross-link (1'-histidyl-3'-tyrosine (His-Tyr)) is located at residues 246–250 (HPEVY). Position 250 (Y250) interacts with O2. Residues H295 and H296 each contribute to the Cu cation site. Mg(2+) is bound by residues H374 and D375. H382 lines the heme a3 pocket. The next 2 membrane-spanning stretches (helical) occupy residues 382–402 (HFHF…IVYI) and 416–436 (LSLM…PMHF). Residue H384 coordinates Fe(II)-heme a. Position 447 (P447) interacts with Ca(2+). The chain crosses the membrane as a helical span at residues 458 to 478 (FICTLGATMMLVLKLTVLFII).

The protein belongs to the heme-copper respiratory oxidase family. As to quaternary structure, component of the cytochrome c oxidase (complex IV, CIV), a multisubunit enzyme composed of a catalytic core of 3 subunits and several supernumerary subunits. The complex exists as a monomer or a dimer and forms supercomplexes (SCs) in the inner mitochondrial membrane with ubiquinol-cytochrome c oxidoreductase (cytochrome b-c1 complex, complex III, CIII). It depends on heme as a cofactor. Cu cation serves as cofactor.

Its subcellular location is the mitochondrion inner membrane. It catalyses the reaction 4 Fe(II)-[cytochrome c] + O2 + 8 H(+)(in) = 4 Fe(III)-[cytochrome c] + 2 H2O + 4 H(+)(out). It participates in energy metabolism; oxidative phosphorylation. Its function is as follows. Component of the cytochrome c oxidase, the last enzyme in the mitochondrial electron transport chain which drives oxidative phosphorylation. The respiratory chain contains 3 multisubunit complexes succinate dehydrogenase (complex II, CII), ubiquinol-cytochrome c oxidoreductase (cytochrome b-c1 complex, complex III, CIII) and cytochrome c oxidase (complex IV, CIV), that cooperate to transfer electrons derived from NADH and succinate to molecular oxygen, creating an electrochemical gradient over the inner membrane that drives transmembrane transport and the ATP synthase. Cytochrome c oxidase is the component of the respiratory chain that catalyzes the reduction of oxygen to water. Electrons originating from reduced cytochrome c in the intermembrane space (IMS) are transferred via the dinuclear copper A center (CU(A)) of subunit 2 and heme A of subunit 1 to the active site in subunit 1, a binuclear center (BNC) formed by heme A3 and copper B (CU(B)). The BNC reduces molecular oxygen to 2 water molecules using 4 electrons from cytochrome c in the IMS and 4 protons from the mitochondrial matrix. In Theileria annulata, this protein is Cytochrome c oxidase subunit 1 (MT-CO1).